The following is a 148-amino-acid chain: 1,4-dihydroxy-2-naphthoyl-CoA hydrolase (148 aa).

The active site involves D15.

It belongs to the 4-hydroxybenzoyl-CoA thioesterase family. DHNA-CoA hydrolase subfamily.

The enzyme catalyses 1,4-dihydroxy-2-naphthoyl-CoA + H2O = 1,4-dihydroxy-2-naphthoate + CoA + H(+). It participates in cofactor biosynthesis; phylloquinone biosynthesis. The protein operates within quinol/quinone metabolism; 1,4-dihydroxy-2-naphthoate biosynthesis; 1,4-dihydroxy-2-naphthoate from chorismate: step 7/7. Its function is as follows. Catalyzes the hydrolysis of 1,4-dihydroxy-2-naphthoyl-CoA (DHNA-CoA) to 1,4-dihydroxy-2-naphthoate (DHNA), a reaction involved in phylloquinone (vitamin K1) biosynthesis. The chain is 1,4-dihydroxy-2-naphthoyl-CoA hydrolase from Nostoc punctiforme (strain ATCC 29133 / PCC 73102).